The following is a 482-amino-acid chain: UDP-N-acetylmuramoyl-L-alanyl-D-glutamate--2,6-diaminopimelate ligase 1 (482 aa).

Serine 30 contacts UDP-N-acetyl-alpha-D-muramoyl-L-alanyl-D-glutamate. 110 to 116 (GTNGKTT) provides a ligand contact to ATP. Residues 152-153 (TT), serine 179, and arginine 187 each bind UDP-N-acetyl-alpha-D-muramoyl-L-alanyl-D-glutamate. Lysine 219 is modified (N6-carboxylysine). Meso-2,6-diaminopimelate-binding positions include arginine 378, 402–405 (DNPR), glycine 452, and glutamate 456. Positions 402 to 405 (DNPR) match the Meso-diaminopimelate recognition motif motif.

This sequence belongs to the MurCDEF family. MurE subfamily. Mg(2+) serves as cofactor. Post-translationally, carboxylation is probably crucial for Mg(2+) binding and, consequently, for the gamma-phosphate positioning of ATP.

The protein resides in the cytoplasm. The enzyme catalyses UDP-N-acetyl-alpha-D-muramoyl-L-alanyl-D-glutamate + meso-2,6-diaminopimelate + ATP = UDP-N-acetyl-alpha-D-muramoyl-L-alanyl-gamma-D-glutamyl-meso-2,6-diaminopimelate + ADP + phosphate + H(+). It functions in the pathway cell wall biogenesis; peptidoglycan biosynthesis. Functionally, catalyzes the addition of meso-diaminopimelic acid to the nucleotide precursor UDP-N-acetylmuramoyl-L-alanyl-D-glutamate (UMAG) in the biosynthesis of bacterial cell-wall peptidoglycan. In Clostridium acetobutylicum (strain ATCC 824 / DSM 792 / JCM 1419 / IAM 19013 / LMG 5710 / NBRC 13948 / NRRL B-527 / VKM B-1787 / 2291 / W), this protein is UDP-N-acetylmuramoyl-L-alanyl-D-glutamate--2,6-diaminopimelate ligase 1.